The primary structure comprises 244 residues: 1-(5-phosphoribosyl)-5-[(5-phosphoribosylamino)methylideneamino] imidazole-4-carboxamide isomerase (244 aa).

The Proton acceptor role is filled by Asp8. Asp129 serves as the catalytic Proton donor.

The protein belongs to the HisA/HisF family.

Its subcellular location is the cytoplasm. It catalyses the reaction 1-(5-phospho-beta-D-ribosyl)-5-[(5-phospho-beta-D-ribosylamino)methylideneamino]imidazole-4-carboxamide = 5-[(5-phospho-1-deoxy-D-ribulos-1-ylimino)methylamino]-1-(5-phospho-beta-D-ribosyl)imidazole-4-carboxamide. The protein operates within amino-acid biosynthesis; L-histidine biosynthesis; L-histidine from 5-phospho-alpha-D-ribose 1-diphosphate: step 4/9. This is 1-(5-phosphoribosyl)-5-[(5-phosphoribosylamino)methylideneamino] imidazole-4-carboxamide isomerase from Bradyrhizobium sp. (strain ORS 278).